The chain runs to 289 residues: ATP synthase subunit a (289 aa).

Transmembrane regions (helical) follow at residues 43–63 (AFHVDTLGWSVALGLIFVLLF), 103–123 (VIAPLALTIFVWVFLMNAVDL), 160–180 (FSVFALIIFYSIKVKGLGGFI), 193–213 (IFVQALLIPVNFLLEFVTLIA), 232–252 (VFILIAVMFGSGLLWLSGLGV), and 259–279 (AVFHILIITLQAFIFMMLTIV).

It belongs to the ATPase A chain family. In terms of assembly, F-type ATPases have 2 components, CF(1) - the catalytic core - and CF(0) - the membrane proton channel. CF(1) has five subunits: alpha(3), beta(3), gamma(1), delta(1), epsilon(1). CF(0) has three main subunits: a(1), b(2) and c(9-12). The alpha and beta chains form an alternating ring which encloses part of the gamma chain. CF(1) is attached to CF(0) by a central stalk formed by the gamma and epsilon chains, while a peripheral stalk is formed by the delta and b chains.

The protein localises to the cell inner membrane. Its function is as follows. Key component of the proton channel; it plays a direct role in the translocation of protons across the membrane. This is ATP synthase subunit a from Pseudomonas fluorescens (strain Pf0-1).